The primary structure comprises 311 residues: Cell division protein ZipA (311 aa).

The Periplasmic segment spans residues 1-5 (MQELR). A helical membrane pass occupies residues 6–26 (FVLIVVGALAIMALLFHGLWT). Residues 27–311 (SKKEGKAKFG…QIVEFKAANA (285 aa)) lie on the Cytoplasmic side of the membrane. Residues 32–54 (KAKFGDKPLSKLDLGESEPKESE) show a composition bias toward basic and acidic residues. The tract at residues 32-60 (KAKFGDKPLSKLDLGESEPKESEMYVAPE) is disordered.

It belongs to the ZipA family. As to quaternary structure, interacts with FtsZ via their C-terminal domains.

Its subcellular location is the cell inner membrane. In terms of biological role, essential cell division protein that stabilizes the FtsZ protofilaments by cross-linking them and that serves as a cytoplasmic membrane anchor for the Z ring. Also required for the recruitment to the septal ring of downstream cell division proteins. The protein is Cell division protein ZipA of Vibrio vulnificus (strain CMCP6).